The chain runs to 283 residues: Elongation factor Ts (283 aa).

Positions 80–83 (TDFV) are involved in Mg(2+) ion dislocation from EF-Tu.

Belongs to the EF-Ts family.

It is found in the cytoplasm. Associates with the EF-Tu.GDP complex and induces the exchange of GDP to GTP. It remains bound to the aminoacyl-tRNA.EF-Tu.GTP complex up to the GTP hydrolysis stage on the ribosome. The sequence is that of Elongation factor Ts from Cronobacter sakazakii (strain ATCC BAA-894) (Enterobacter sakazakii).